The sequence spans 413 residues: Histidinol-phosphate aminotransferase, chloroplastic (413 aa).

The transit peptide at 1-35 (MGVIELCNTSSICIGRANPSCCSIERNQRRRIICM) directs the protein to the chloroplast. N6-(pyridoxal phosphate)lysine is present on K273.

This sequence belongs to the class-II pyridoxal-phosphate-dependent aminotransferase family. Histidinol-phosphate aminotransferase subfamily. In terms of assembly, homodimer. It depends on pyridoxal 5'-phosphate as a cofactor. In terms of tissue distribution, expressed in flowers, leaves, stems and roots.

It localises to the plastid. Its subcellular location is the chloroplast. It carries out the reaction L-histidinol phosphate + 2-oxoglutarate = 3-(imidazol-4-yl)-2-oxopropyl phosphate + L-glutamate. The protein operates within amino-acid biosynthesis; L-histidine biosynthesis; L-histidine from 5-phospho-alpha-D-ribose 1-diphosphate: step 7/9. The chain is Histidinol-phosphate aminotransferase, chloroplastic (HPA) from Nicotiana plumbaginifolia (Leadwort-leaved tobacco).